The primary structure comprises 338 residues: Putative transport protein TM_1349 (338 aa).

The next 7 membrane-spanning stretches (helical) occupy residues 20–40 (ILIS…IVLM), 68–88 (ALLL…PPVF), 147–167 (VSVT…VFYI), 203–223 (VIFI…EAFN), 239–259 (FIPI…SLTL), 263–283 (GVLL…VVFI), and 297–317 (IILS…FVGV).

Belongs to the autoinducer-2 exporter (AI-2E) (TC 2.A.86) family.

Its subcellular location is the cell membrane. This chain is Putative transport protein TM_1349, found in Thermotoga maritima (strain ATCC 43589 / DSM 3109 / JCM 10099 / NBRC 100826 / MSB8).